The sequence spans 64 residues: Large ribosomal subunit protein bL35 (64 aa).

Residues 1 to 25 (MPKLKTHSGAAKRFKKTATGKVKRS) form a disordered region.

This sequence belongs to the bacterial ribosomal protein bL35 family.

The sequence is that of Large ribosomal subunit protein bL35 from Koribacter versatilis (strain Ellin345).